Here is a 715-residue protein sequence, read N- to C-terminus: 1,4-alpha-glucan branching enzyme GlgB (715 aa).

D399 acts as the Nucleophile in catalysis. The Proton donor role is filled by E452.

This sequence belongs to the glycosyl hydrolase 13 family. GlgB subfamily. In terms of assembly, monomer.

It catalyses the reaction Transfers a segment of a (1-&gt;4)-alpha-D-glucan chain to a primary hydroxy group in a similar glucan chain.. Its pathway is glycan biosynthesis; glycogen biosynthesis. Its function is as follows. Catalyzes the formation of the alpha-1,6-glucosidic linkages in glycogen by scission of a 1,4-alpha-linked oligosaccharide from growing alpha-1,4-glucan chains and the subsequent attachment of the oligosaccharide to the alpha-1,6 position. The protein is 1,4-alpha-glucan branching enzyme GlgB of Rhodopseudomonas palustris (strain BisA53).